The following is an 856-amino-acid chain: MAP kinase phosphatase with leucine-rich repeats protein 3 (856 aa).

Low complexity predominate over residues 1–10 (MGNSHSSENG). Disordered stretches follow at residues 1–24 (MGNS…GGGS), 84–195 (VKKN…SSVL), and 214–326 (DDNS…NAKD). G2 is lipidated: N-myristoyl glycine. Gly residues predominate over residues 11–24 (GNSGSGGGSGGGGS). The segment covering 90–142 (NSSNNNSNNNSNNNNNNNTLNNSTIITTTTTTTTTSTPTTTIMITPPQQQQQQ) has biased composition (low complexity). Positions 155–165 (ESSTPNEQQIR) are enriched in polar residues. Low complexity-rich tracts occupy residues 178–195 (ESSF…SSVL) and 224–243 (QQQQ…QQTQ). Polar residues-rich tracts occupy residues 254 to 265 (IVNNKSSSTTNI) and 272 to 281 (AQTSRSTSIP). Low complexity predominate over residues 306-323 (NSLSSSNIITPNNTTNTN). LRR repeat units follow at residues 344–365 (KIFS…ILSI), 370–391 (EIQE…QLVK), 392–413 (SLTT…VFIE), 416–437 (SLTS…IDQI), 439–461 (NLKY…SNLS), 462–484 (QLIS…DDLI), 485–506 (NLRM…RKLV), and 507–528 (NLVT…FAYL). The tract at residues 554 to 577 (NINSNNNDSNNSNNNNNNNNDNNN) is disordered. The Tyrosine-protein phosphatase domain occupies 632-773 (IPSEIIPGIF…LLKYEAKLFC (142 aa)). Residue C717 is the Phosphocysteine intermediate of the active site. Residues 810-856 (INNSSNSNNNNSTDNSNNSSTSTTPNLSSLSSDSSSSASLSKLSISK) are disordered.

It belongs to the protein-tyrosine phosphatase family. Non-receptor class dual specificity subfamily.

The enzyme catalyses O-phospho-L-tyrosyl-[protein] + H2O = L-tyrosyl-[protein] + phosphate. It carries out the reaction O-phospho-L-seryl-[protein] + H2O = L-seryl-[protein] + phosphate. The catalysed reaction is O-phospho-L-threonyl-[protein] + H2O = L-threonyl-[protein] + phosphate. Functionally, probable phosphatase with dual specificity toward Ser/Thr and Tyr-containing proteins. This chain is MAP kinase phosphatase with leucine-rich repeats protein 3 (mpl3), found in Dictyostelium discoideum (Social amoeba).